A 1065-amino-acid chain; its full sequence is N-terminal acetyltransferase B complex auxiliary subunit NAA25 (1065 aa).

One copy of the TPR repeat lies at 294-327 (VDKLRIQGRLLARANDYSAAVDVYKKILELSPDD).

Belongs to the MDM20/NAA25 family. As to expression, ubiquitously expressed, with a higher expression in vascular bundles, hydathodes, leaf primordia and the base of the trichomes.

The protein resides in the cytoplasm. Its function is as follows. Auxiliary subunit of the NatB N-alpha-acetyltransferase complex. Required for flowering time regulation and for vegetative and reproductive plant development. This is N-terminal acetyltransferase B complex auxiliary subunit NAA25 from Arabidopsis thaliana (Mouse-ear cress).